Here is a 90-residue protein sequence, read N- to C-terminus: Putative antitoxin VapB8 (90 aa).

The segment at 1–56 is disordered; it reads MEKSRCHAVAHGGGCAGSAKSHKSGGRCGQGRGAGDSHGTRGAGRRYRAASAPHPL. The segment covering 26 to 36 has biased composition (gly residues); sequence GRCGQGRGAGD.

In terms of biological role, antitoxin component of a possible type II toxin-antitoxin (TA) system. The cognate toxin is VapC8. This chain is Putative antitoxin VapB8 (vapB8), found in Mycobacterium tuberculosis (strain ATCC 25618 / H37Rv).